Reading from the N-terminus, the 353-residue chain is DNA replication and repair protein RecF (353 aa).

ATP is bound at residue 30 to 37 (GANGQGKT).

Belongs to the RecF family.

The protein localises to the cytoplasm. Its function is as follows. The RecF protein is involved in DNA metabolism; it is required for DNA replication and normal SOS inducibility. RecF binds preferentially to single-stranded, linear DNA. It also seems to bind ATP. This chain is DNA replication and repair protein RecF, found in Carboxydothermus hydrogenoformans (strain ATCC BAA-161 / DSM 6008 / Z-2901).